The sequence spans 602 residues: Pentatricopeptide repeat-containing protein At3g04760, chloroplastic (602 aa).

The N-terminal 78 residues, 1–78, are a transit peptide targeting the chloroplast; sequence MTPLSSELVG…TDATLPTERR (78 aa). Residues 42–64 are compositionally biased toward polar residues; that stretch reads FSNSNPNNDNGRSFSSSGARNLQ. Residues 42–85 form a disordered region; it reads FSNSNPNNDNGRSFSSSGARNLQTTTTTDATLPTERRQQHSQSL. Residues 65-74 are compositionally biased toward low complexity; the sequence is TTTTTDATLP. 14 PPR repeats span residues 88-122, 123-153, 157-191, 192-226, 227-261, 262-296, 297-331, 332-366, 367-401, 402-436, 437-471, 472-506, 507-541, and 542-576; these read RDTQ…GYNP, DVIL…LEKF, DVFA…DFSP, DTVT…NCQP, TVIT…GLKP, DMFT…GCEP, DVIS…KCDP, NVVT…GLTP, DAYS…GCLP, DIVN…GCSP, NSSS…GIDP, DEIT…EFHP, SVVT…GCRP, and NETT…DAIS.

Belongs to the PPR family. P subfamily.

The protein resides in the plastid. Its subcellular location is the chloroplast. This Arabidopsis thaliana (Mouse-ear cress) protein is Pentatricopeptide repeat-containing protein At3g04760, chloroplastic.